The sequence spans 319 residues: Large ribosomal subunit protein eL8 (319 aa).

K87 carries the post-translational modification N6-acetyllysine. Residue K101 forms a Glycyl lysine isopeptide (Lys-Gly) (interchain with G-Cter in SUMO2) linkage. Residue K150 is modified to N6-acetyllysine; alternate. K150 is covalently cross-linked (Glycyl lysine isopeptide (Lys-Gly) (interchain with G-Cter in SUMO2); alternate). A Glycyl lysine isopeptide (Lys-Gly) (interchain with G-Cter in SUMO2) cross-link involves residue K178. Residue K270 is modified to N6-acetyllysine. K298 is covalently cross-linked (Glycyl lysine isopeptide (Lys-Gly) (interchain with G-Cter in SUMO2)).

Belongs to the eukaryotic ribosomal protein eL8 family. In terms of assembly, component of the large ribosomal subunit. Interacts with CRY1. Interacts with DICER1, AGO2, TARBP2, MOV10 and EIF6; they form a large RNA-induced silencing complex (RISC).

The protein localises to the cytoplasm. Its function is as follows. Component of the large ribosomal subunit. The ribosome is a large ribonucleoprotein complex responsible for the synthesis of proteins in the cell. In Oryctolagus cuniculus (Rabbit), this protein is Large ribosomal subunit protein eL8 (RPL7A).